A 154-amino-acid chain; its full sequence is Ecotin-like protein 2 (154 aa).

Belongs to the protease inhibitor I11 (ecotin) family.

The polypeptide is Ecotin-like protein 2 (Leishmania braziliensis).